We begin with the raw amino-acid sequence, 357 residues long: Uroporphyrinogen decarboxylase (357 aa).

Residues Arg-27–Arg-31, Asp-77, Tyr-154, Ser-209, and His-330 each bind substrate.

Belongs to the uroporphyrinogen decarboxylase family. Homodimer.

Its subcellular location is the cytoplasm. The enzyme catalyses uroporphyrinogen III + 4 H(+) = coproporphyrinogen III + 4 CO2. The protein operates within porphyrin-containing compound metabolism; protoporphyrin-IX biosynthesis; coproporphyrinogen-III from 5-aminolevulinate: step 4/4. Catalyzes the decarboxylation of four acetate groups of uroporphyrinogen-III to yield coproporphyrinogen-III. This chain is Uroporphyrinogen decarboxylase, found in Acinetobacter baumannii (strain ATCC 17978 / DSM 105126 / CIP 53.77 / LMG 1025 / NCDC KC755 / 5377).